Reading from the N-terminus, the 169-residue chain is Thaumatin-like pathogenesis-related protein 3 (169 aa).

Positions 1-21 (MATSSAVLFLLLAVFAAGASA) are cleaved as a signal peptide.

Belongs to the thaumatin family.

Functionally, associated with resistance against stem rust fungi. The polypeptide is Thaumatin-like pathogenesis-related protein 3 (RASTL-3) (Avena sativa (Oat)).